Here is a 434-residue protein sequence, read N- to C-terminus: Flagellum-specific ATP synthase (434 aa).

Residue 164–171 (AGSGVGKS) participates in ATP binding.

Belongs to the ATPase alpha/beta chains family.

Its subcellular location is the cytoplasm. The catalysed reaction is ATP + H2O + 4 H(+)(in) = ADP + phosphate + 5 H(+)(out). Its function is as follows. Probable catalytic subunit of a protein translocase for flagellum-specific export, or a proton translocase involved in local circuits at the flagellum. The sequence is that of Flagellum-specific ATP synthase (fliI) from Helicobacter pylori (strain J99 / ATCC 700824) (Campylobacter pylori J99).